Here is a 274-residue protein sequence, read N- to C-terminus: Diaminopimelate epimerase (274 aa).

Substrate-binding residues include N11, Q44, and N64. The active-site Proton donor is C73. Substrate contacts are provided by residues 74–75 (GN), N157, N190, and 208–209 (ER). C217 (proton acceptor) is an active-site residue. 218–219 (GS) is a binding site for substrate.

This sequence belongs to the diaminopimelate epimerase family. In terms of assembly, homodimer.

It is found in the cytoplasm. It catalyses the reaction (2S,6S)-2,6-diaminopimelate = meso-2,6-diaminopimelate. It functions in the pathway amino-acid biosynthesis; L-lysine biosynthesis via DAP pathway; DL-2,6-diaminopimelate from LL-2,6-diaminopimelate: step 1/1. Catalyzes the stereoinversion of LL-2,6-diaminopimelate (L,L-DAP) to meso-diaminopimelate (meso-DAP), a precursor of L-lysine and an essential component of the bacterial peptidoglycan. The polypeptide is Diaminopimelate epimerase (Shigella flexneri serotype 5b (strain 8401)).